We begin with the raw amino-acid sequence, 464 residues long: MTGRVTSVRGPVLDIRVEGPLPAIGDVVEVGSLPVVAEIQAHLGAADVRAIALHSTQGIARGETVRTTGGPLRVPTGPAVLGRLLDVAGRPADLGPPIPAEAPRAPILHPAPPLAAQDARFQVFSTGIKVLDLLAPLAQGGKTAMFGGAGVGKTVLVMELIRAMVSGYDGISVFAGVGERSREGHEMLGEMKASGVLDRTVLVYGQMNEPPGARWRVPLTALTIAEGFRDGEGRNVLLLIDNVFRFVQAGAEVSGLLGRMPSRVGYQPTLETEVAALQERIASVGRASVTAIEAVYVPADDFTDPAVTAISAHVDSTVVLSRQLAAEGIYPAIDPLATTSVLLDPAVVGEEHARVAGRLKEAIEHYHELRDVIALLGIEELGREEQLMVGRARKLQRFLTQPFFVAAAYTGMEGRSVPVAETVQGCAAILAGECDDWDEGSLYMIGTLAEARAREEARRRKGAA.

147 to 154 contributes to the ATP binding site; the sequence is GGAGVGKT.

Belongs to the ATPase alpha/beta chains family. As to quaternary structure, F-type ATPases have 2 components, CF(1) - the catalytic core - and CF(0) - the membrane proton channel. CF(1) has five subunits: alpha(3), beta(3), gamma(1), delta(1), epsilon(1). CF(0) has four main subunits: a(1), b(1), b'(1) and c(9-12).

The protein resides in the cell inner membrane. The enzyme catalyses ATP + H2O + 4 H(+)(in) = ADP + phosphate + 5 H(+)(out). In terms of biological role, produces ATP from ADP in the presence of a proton gradient across the membrane. The catalytic sites are hosted primarily by the beta subunits. This is ATP synthase subunit beta 2 from Cereibacter sphaeroides (strain ATCC 17029 / ATH 2.4.9) (Rhodobacter sphaeroides).